We begin with the raw amino-acid sequence, 334 residues long: Ornithine carbamoyltransferase (334 aa).

Residues serine 56–threonine 59, glutamine 83, arginine 107, and histidine 134–glutamine 137 each bind carbamoyl phosphate. L-ornithine-binding positions include asparagine 168, aspartate 232, and serine 236–methionine 237. Residues cysteine 274 to leucine 275 and arginine 320 each bind carbamoyl phosphate.

The protein belongs to the aspartate/ornithine carbamoyltransferase superfamily. OTCase family.

It localises to the cytoplasm. The enzyme catalyses carbamoyl phosphate + L-ornithine = L-citrulline + phosphate + H(+). The protein operates within amino-acid biosynthesis; L-arginine biosynthesis; L-arginine from L-ornithine and carbamoyl phosphate: step 1/3. Functionally, reversibly catalyzes the transfer of the carbamoyl group from carbamoyl phosphate (CP) to the N(epsilon) atom of ornithine (ORN) to produce L-citrulline. This is Ornithine carbamoyltransferase from Escherichia coli (strain 55989 / EAEC).